The following is a 171-amino-acid chain: Large ribosomal subunit protein uL10 (171 aa).

This sequence belongs to the universal ribosomal protein uL10 family. In terms of assembly, part of the ribosomal stalk of the 50S ribosomal subunit. The N-terminus interacts with L11 and the large rRNA to form the base of the stalk. The C-terminus forms an elongated spine to which L12 dimers bind in a sequential fashion forming a multimeric L10(L12)X complex.

Forms part of the ribosomal stalk, playing a central role in the interaction of the ribosome with GTP-bound translation factors. This chain is Large ribosomal subunit protein uL10, found in Paramagnetospirillum magneticum (strain ATCC 700264 / AMB-1) (Magnetospirillum magneticum).